Consider the following 218-residue polypeptide: Ribosomal RNA small subunit methyltransferase G (218 aa).

S-adenosyl-L-methionine-binding positions include glycine 82, leucine 87, 133-134 (VE), and arginine 147.

This sequence belongs to the methyltransferase superfamily. RNA methyltransferase RsmG family.

The protein localises to the cytoplasm. The catalysed reaction is guanosine(527) in 16S rRNA + S-adenosyl-L-methionine = N(7)-methylguanosine(527) in 16S rRNA + S-adenosyl-L-homocysteine. In terms of biological role, specifically methylates the N7 position of guanine in position 527 of 16S rRNA. This Leptothrix cholodnii (strain ATCC 51168 / LMG 8142 / SP-6) (Leptothrix discophora (strain SP-6)) protein is Ribosomal RNA small subunit methyltransferase G.